The following is a 197-amino-acid chain: Protein jagunal (197 aa).

Residues 1-39 (MATRGGPMVAGTDGNDFEFRQRVAGTYQISLLNKSRLKY) are Cytoplasmic-facing. A helical membrane pass occupies residues 40 to 60 (CIFFHALLFFVMLAKLTSDIL). At 61 to 78 (DHLDIFVLEIEELEVPPP) the chain is on the lumenal side. Residues 79–99 (LWWEYVWAASLLTSFLGLSAA) form a helical membrane-spanning segment. Residues 100–109 (RGNKVREMQK) are Cytoplasmic-facing. A helical transmembrane segment spans residues 110–130 (YMVAILLFAILPLFYCFAYYF). Over 131–159 (SDVWEFATLDKSVELDETDIFVWRGYPYG) the chain is Lumenal. A helical transmembrane segment spans residues 160 to 180 (VFWYAFCFVGFQVHGFTLYFA). The Cytoplasmic portion of the chain corresponds to 181–197 (YNLVKAWKARTATRKFQ).

This sequence belongs to the jagunal family.

The protein localises to the endoplasmic reticulum membrane. Its function is as follows. Required for endoplasmic reticulum organization and proper vesicular traffic during vitellogenesis. Required for oocyte and bristle growth. The protein is Protein jagunal of Drosophila melanogaster (Fruit fly).